Reading from the N-terminus, the 608-residue chain is Protein FAM151A (608 aa).

Residues 14–34 (WILAGSVTVTLVLAISLILGL) form a helical membrane-spanning segment. The span at 586 to 596 (VSSNRPSSRIG) shows a compositional bias: polar residues. The tract at residues 586–608 (VSSNRPSSRIGPSSVEGFPGESR) is disordered.

This sequence belongs to the menorin family.

The protein resides in the membrane. The protein is Protein FAM151A (Fam151a) of Mus musculus (Mouse).